Consider the following 49-residue polypeptide: Large ribosomal subunit protein bL33B (49 aa).

This sequence belongs to the bacterial ribosomal protein bL33 family.

The sequence is that of Large ribosomal subunit protein bL33B (rpmG2) from Lactococcus lactis subsp. cremoris (Streptococcus cremoris).